A 245-amino-acid polypeptide reads, in one-letter code: tRNA pseudouridine synthase A (245 aa).

Aspartate 52 (nucleophile) is an active-site residue. Tyrosine 112 contributes to the substrate binding site.

Belongs to the tRNA pseudouridine synthase TruA family. Homodimer.

The enzyme catalyses uridine(38/39/40) in tRNA = pseudouridine(38/39/40) in tRNA. Functionally, formation of pseudouridine at positions 38, 39 and 40 in the anticodon stem and loop of transfer RNAs. This Dictyoglomus thermophilum (strain ATCC 35947 / DSM 3960 / H-6-12) protein is tRNA pseudouridine synthase A.